The chain runs to 836 residues: MAKQQDQVDKIRENLDNSTVKSISLANELERSFMEYAMSVIVARALPDARDGLKPVHRRVLYGAYIGGMHHDRPFKKSARIVGDVMSKFHPHGDMAIYDTMSRMAQDFSLRYLLIDGHGNFGSIDGDRPAAQRYTEARLSKLAAELLKDIDKDTVDFIANYDGEEKEPTVLPAAFPNLLANGSSGIAVGMSTSIPSHNLSELIAGLIMLIDNPQCTFQELLTVIKGPDFPTGANIIYTKGIESYFETGKGNVVIRSKVEIEQLQTRSALVVTEIPYMVNKTTLIEKIVELVKAEEISGIADIRDESSREGIRLVIEVKRDTVPEVLLNQLFKSTRLQVRFPVNMLALVKGAPVLLNMKQALEVYLDHQIDVLVRKTKFVLNKQQERYHILSGLLIAALNIDEVVAIIKKSANNQEAINTLNTKFKLDEIQAKAVLDMRLRSLSVLEVNKLQTEQKELKDSIEFCKKVLADQKLQLKIIKEELQKINDQFGDERRSEILYDISEEIDDESLIKVENVVITMSTNGYLKRIGVDAYNLQHRGGVGVKGLTTYVDDSISQLLVCSTHSDLLFFTDKGKVYRIRAHQIPYGFRTNKGIPAVNLIKIEKDERICSLLSVNNYDDGYFFFCTKNGIVKRTSLNEFINILSNGKRAISFDDNDTLYSVIKTHGNDEIFIGSTNGFVVRFHENQLRVLSRTARGVFGISLNKGEFVNGLSTSSNGSLLLSVGQNGIGKLTSIDKYRLTKRNAKGVKTLRVTDRTGPVVTTTTVFGNEDLLMISSAGKIVRTSLQELSEQGKNTSGVKLIRLKDNERLERVTIFKEELEDKEMQLEDVGSKQITQ.

The Topo IIA-type catalytic domain occupies 46-510 (LPDARDGLKP…ISEEIDDESL (465 aa)). Tyr-134 serves as the catalytic O-(5'-phospho-DNA)-tyrosine intermediate. The short motif at 537–543 (QHRGGVG) is the GyrA-box element.

Belongs to the type II topoisomerase GyrA/ParC subunit family. In terms of assembly, heterotetramer, composed of two GyrA and two GyrB chains. In the heterotetramer, GyrA contains the active site tyrosine that forms a transient covalent intermediate with DNA, while GyrB binds cofactors and catalyzes ATP hydrolysis.

It localises to the cytoplasm. It carries out the reaction ATP-dependent breakage, passage and rejoining of double-stranded DNA.. Functionally, a type II topoisomerase that negatively supercoils closed circular double-stranded (ds) DNA in an ATP-dependent manner to modulate DNA topology and maintain chromosomes in an underwound state. Negative supercoiling favors strand separation, and DNA replication, transcription, recombination and repair, all of which involve strand separation. Also able to catalyze the interconversion of other topological isomers of dsDNA rings, including catenanes and knotted rings. Type II topoisomerases break and join 2 DNA strands simultaneously in an ATP-dependent manner. This Mycoplasma genitalium (strain ATCC 33530 / DSM 19775 / NCTC 10195 / G37) (Mycoplasmoides genitalium) protein is DNA gyrase subunit A.